The chain runs to 196 residues: Oplophorus-luciferin 2-monooxygenase catalytic subunit (196 aa).

Residues 1–27 (MAYSTLFIIALTAVVTQASSTQKSNLT) form the signal peptide.

As to quaternary structure, heterotetramer of a catalytic 19 kDa and a non-catalytic 35 kDa subunit.

It is found in the secreted. The enzyme catalyses coelenterazine + O2 = coelenteramide + hnu + CO2. Its activity is regulated as follows. Inhibited by micromolar Cu(2+). Functionally, catalytic subunit of oplophorus-luciferin 2-monooxygenase. Oxidoreductase that converts coelenterazine (the oplophorus luciferin) to coelenteramide under emission of blue light with a maximum at 454 nm. Is also active with bisdeoxycoelenterazine. The chain is Oplophorus-luciferin 2-monooxygenase catalytic subunit from Oplophorus gracilirostris (Luminous shrimp).